Consider the following 322-residue polypeptide: tRNA U34 carboxymethyltransferase (322 aa).

Carboxy-S-adenosyl-L-methionine-binding positions include Lys-92, Trp-106, Lys-111, Gly-131, Asp-153–Thr-155, Val-181–Glu-182, Met-196, Tyr-200, and Arg-315.

The protein belongs to the class I-like SAM-binding methyltransferase superfamily. CmoB family. Homotetramer.

It carries out the reaction carboxy-S-adenosyl-L-methionine + 5-hydroxyuridine(34) in tRNA = 5-carboxymethoxyuridine(34) in tRNA + S-adenosyl-L-homocysteine + H(+). Its function is as follows. Catalyzes carboxymethyl transfer from carboxy-S-adenosyl-L-methionine (Cx-SAM) to 5-hydroxyuridine (ho5U) to form 5-carboxymethoxyuridine (cmo5U) at position 34 in tRNAs. This is tRNA U34 carboxymethyltransferase from Colwellia psychrerythraea (strain 34H / ATCC BAA-681) (Vibrio psychroerythus).